A 312-amino-acid chain; its full sequence is MLTFQQIILTLQQYWDKQGCALLQPYDMEVGAGTSHTATFLRALGPEPWKAAYVQPSRRPKDGRYGDNPNRLQHYYQFQVVLKPAPGNILELYLGSLEALGFDLQQNDIRFVEDDWENPTLGAWGLGWEVWLNGMEVTQFTYFQQVGGINCRPITGEITYGLERLAMYLQGVENVYDLVYSKGVNGAPDLKYGDVFHQNEVEQSAYNFEHSDADFLFTAFNAHEKKAQELMEHKLALPAYEQVLKAAHTFNLLDARGAISVTERATYIGRIRNLARAVAASYLDSRARLGFPMAPKAWADEVLAELAKKAAA.

This sequence belongs to the class-II aminoacyl-tRNA synthetase family. As to quaternary structure, tetramer of two alpha and two beta subunits.

It is found in the cytoplasm. It carries out the reaction tRNA(Gly) + glycine + ATP = glycyl-tRNA(Gly) + AMP + diphosphate. The protein is Glycine--tRNA ligase alpha subunit of Methylobacillus flagellatus (strain ATCC 51484 / DSM 6875 / VKM B-1610 / KT).